A 209-amino-acid polypeptide reads, in one-letter code: GTP cyclohydrolase-2 (209 aa).

49 to 53 (RIHSE) lines the GTP pocket. 3 residues coordinate Zn(2+): C54, C65, and C67. Residues Q70, 92 to 94 (EGR), and T114 contribute to the GTP site. The active-site Proton acceptor is D126. R128 serves as the catalytic Nucleophile. T149 and K154 together coordinate GTP.

The protein belongs to the GTP cyclohydrolase II family. It depends on Zn(2+) as a cofactor.

It catalyses the reaction GTP + 4 H2O = 2,5-diamino-6-hydroxy-4-(5-phosphoribosylamino)-pyrimidine + formate + 2 phosphate + 3 H(+). It participates in cofactor biosynthesis; riboflavin biosynthesis; 5-amino-6-(D-ribitylamino)uracil from GTP: step 1/4. Its function is as follows. Catalyzes the conversion of GTP to 2,5-diamino-6-ribosylamino-4(3H)-pyrimidinone 5'-phosphate (DARP), formate and pyrophosphate. In Shewanella pealeana (strain ATCC 700345 / ANG-SQ1), this protein is GTP cyclohydrolase-2.